The sequence spans 353 residues: Stomatin-like protein 2, mitochondrial (353 aa).

Residues 1 to 28 (MLARAARGTGALLLRGSVQASGRIPRRA) constitute a mitochondrion transit peptide. At Ser17 the chain carries Phosphoserine; by PKC/PRKCZ. At Tyr124 the chain carries Phosphotyrosine. Lys145 bears the N6-acetyllysine; alternate mark. At Lys145 the chain carries N6-succinyllysine; alternate. Residues 215 to 252 (INVAEGKKQAQILASEAEKAEQINQAAGEASAVLAKAK) are a coiled coil. Residue Lys233 is modified to N6-acetyllysine. Positions 324 to 353 (VPGAQNSSEARRDVQTTDTSIEELGRVKLS) are disordered. Ser330 is modified (phosphoserine).

It belongs to the band 7/mec-2 family. As to quaternary structure, forms homooligomers. Interacts with MFN2; may form heterooligomers. Interacts with PHB1 and PHB2; recruits them to cardiolipin-enriched mitochondrial membranes and stabilizes them. Interacts with CACNA2D2.

It is found in the cell membrane. The protein localises to the mitochondrion. The protein resides in the mitochondrion inner membrane. It localises to the mitochondrion intermembrane space. Its subcellular location is the membrane raft. It is found in the cytoplasm. The protein localises to the cytoskeleton. In terms of biological role, mitochondrial protein that probably regulates the biogenesis and the activity of mitochondria. Stimulates cardiolipin biosynthesis, binds cardiolipin-enriched membranes where it recruits and stabilizes some proteins including prohibitin and may therefore act in the organization of functional microdomains in mitochondrial membranes. Through regulation of the mitochondrial function may play a role into several biological processes including cell migration, cell proliferation, T-cell activation, calcium homeostasis and cellular response to stress. May play a role in calcium homeostasis through negative regulation of calcium efflux from mitochondria. Required for mitochondrial hyperfusion a pro-survival cellular response to stress which results in increased ATP production by mitochondria. May also regulate the organization of functional domains at the plasma membrane and play a role in T-cell activation through association with the T-cell receptor signaling complex and its regulation. This is Stomatin-like protein 2, mitochondrial (Stoml2) from Rattus norvegicus (Rat).